Consider the following 291-residue polypeptide: Trimeric intracellular cation channel type B (291 aa).

The Lumenal segment spans residues 1–16 (MEYPWDDLTLAFSRTS). The helical transmembrane segment at 17–33 (MFPFFDIAHYLVSVMAL) threads the bilayer. The Cytoplasmic portion of the chain corresponds to 34-47 (KQRPGAVAAAWSNP). The chain crosses the membrane as a helical span at residues 48–69 (LSSWLSAMLHCFGGGILSCILL). Topologically, residues 70-80 (AEPPLKFLTNH) are lumenal. Residues 81–99 (TNILLASSIWYIVFFCPRD) form a helical membrane-spanning segment. The Cytoplasmic portion of the chain corresponds to 100 to 103 (LVSQ). Residues 104–122 (GYSYQPIQLLAAGMKEVTR) form a helical membrane-spanning segment. Residues K118 and R122 each contribute to the a 1,2-diacyl-sn-glycero-3-phospho-(1D-myo-inositol-4,5-bisphosphate) site. Over 123 to 138 (TWKIVGGVAHANGYYR) the chain is Lumenal. Residues 139–156 (NGWIVMIAVGWARGAGGA) form a helical membrane-spanning segment. Residues 157–179 (IITACEQLLKGDWKPEGDEWLKM) lie on the Cytoplasmic side of the membrane. Residues 180 to 197 (SFPCKVTLLGSIMFTFQH) traverse the membrane as a helical segment. Residues 198–206 (TRHLAISKH) are Lumenal-facing. The chain crosses the membrane as a helical span at residues 207–225 (DLMFLYTIFLVTIKVTMMM). At 226-291 (TKDAAVTLTP…SAKRHAKKED (66 aa)) the chain is on the cytoplasmic side. The tract at residues 254-291 (LSEKKAEVKPSSNGSASSASKRGTEPPSSAKRHAKKED) is disordered. Residues 264–273 (SSNGSASSAS) are compositionally biased toward low complexity.

This sequence belongs to the TMEM38 family. Homotrimer; conformation seems to be controled by binding to diacylglycerol (DAG).

The protein resides in the endoplasmic reticulum membrane. It catalyses the reaction K(+)(in) = K(+)(out). Channel activity is activated by increased cytosolic Ca(2+) levels and blocked by luminal high Ca(2+) levels. Intracellular monovalent cation channel required for maintenance of rapid intracellular calcium release. Acts as a potassium counter-ion channel that functions in synchronization with calcium release from intracellular stores. Activated by increased cytosolic Ca(2+) levels. This Rattus norvegicus (Rat) protein is Trimeric intracellular cation channel type B (Tmem38b).